Reading from the N-terminus, the 203-residue chain is Glycerol-3-phosphate acyltransferase (203 aa).

Helical transmembrane passes span 4 to 24 (IAPG…AILV), 56 to 76 (VAVL…AYML), 80 to 100 (PFWL…PVFF), 112 to 132 (FGAI…TWLL), and 138 to 158 (GYSS…VWWF).

This sequence belongs to the PlsY family. As to quaternary structure, probably interacts with PlsX.

It localises to the cell inner membrane. The enzyme catalyses an acyl phosphate + sn-glycerol 3-phosphate = a 1-acyl-sn-glycero-3-phosphate + phosphate. Its pathway is lipid metabolism; phospholipid metabolism. Catalyzes the transfer of an acyl group from acyl-phosphate (acyl-PO(4)) to glycerol-3-phosphate (G3P) to form lysophosphatidic acid (LPA). This enzyme utilizes acyl-phosphate as fatty acyl donor, but not acyl-CoA or acyl-ACP. In Enterobacter sp. (strain 638), this protein is Glycerol-3-phosphate acyltransferase.